The primary structure comprises 540 residues: Chaperonin GroEL (540 aa).

ATP-binding positions include 29-32 (TLGP), 86-90 (DGTTT), Gly413, 476-478 (NAA), and Asp492.

It belongs to the chaperonin (HSP60) family. Forms a cylinder of 14 subunits composed of two heptameric rings stacked back-to-back. Interacts with the co-chaperonin GroES.

The protein resides in the cytoplasm. It catalyses the reaction ATP + H2O + a folded polypeptide = ADP + phosphate + an unfolded polypeptide.. Its function is as follows. Together with its co-chaperonin GroES, plays an essential role in assisting protein folding. The GroEL-GroES system forms a nano-cage that allows encapsulation of the non-native substrate proteins and provides a physical environment optimized to promote and accelerate protein folding. This is Chaperonin GroEL from Geobacillus thermodenitrificans (strain NG80-2).